Here is a 200-residue protein sequence, read N- to C-terminus: Large ribosomal subunit protein uL4 (200 aa).

Positions 42-65 are disordered; it reads TRAQKTRSDVSGGGAKPWRQKGTG.

The protein belongs to the universal ribosomal protein uL4 family. As to quaternary structure, part of the 50S ribosomal subunit.

Functionally, one of the primary rRNA binding proteins, this protein initially binds near the 5'-end of the 23S rRNA. It is important during the early stages of 50S assembly. It makes multiple contacts with different domains of the 23S rRNA in the assembled 50S subunit and ribosome. Forms part of the polypeptide exit tunnel. The protein is Large ribosomal subunit protein uL4 of Photobacterium profundum (strain SS9).